The following is a 1788-amino-acid chain: Protein TIC 214 (1788 aa).

6 helical membrane-spanning segments follow: residues 25-45 (IINS…FSIG), 70-90 (IGFI…PLHL), 95-115 (PHTI…WNNH), 132-152 (LNIQ…HFIL), 180-200 (VGWL…LFWI), and 223-243 (IFSI…PSPL). Disordered stretches follow at residues 248 to 297 (LKKT…EEKE) and 1482 to 1526 (DLEN…DFDR). 2 stretches are compositionally biased toward basic and acidic residues: residues 253-277 (KREE…EKGT) and 1513-1526 (PLKK…DFDR).

This sequence belongs to the TIC214 family. Part of the Tic complex.

The protein resides in the plastid. The protein localises to the chloroplast inner membrane. Involved in protein precursor import into chloroplasts. May be part of an intermediate translocation complex acting as a protein-conducting channel at the inner envelope. In Ranunculus macranthus (Large buttercup), this protein is Protein TIC 214.